The chain runs to 450 residues: Phosphoglucosamine mutase (450 aa).

Catalysis depends on Ser-102, which acts as the Phosphoserine intermediate. Mg(2+) is bound by residues Ser-102, Asp-243, Asp-245, and Asp-247. The residue at position 102 (Ser-102) is a Phosphoserine.

This sequence belongs to the phosphohexose mutase family. Mg(2+) serves as cofactor. Post-translationally, activated by phosphorylation.

The catalysed reaction is alpha-D-glucosamine 1-phosphate = D-glucosamine 6-phosphate. Its function is as follows. Catalyzes the conversion of glucosamine-6-phosphate to glucosamine-1-phosphate. This Rhizobium etli (strain ATCC 51251 / DSM 11541 / JCM 21823 / NBRC 15573 / CFN 42) protein is Phosphoglucosamine mutase.